We begin with the raw amino-acid sequence, 762 residues long: 5-methyltetrahydropteroyltriglutamate--homocysteine methyltransferase (762 aa).

Residues 17 to 20 and Lys111 each bind 5-methyltetrahydropteroyltri-L-glutamate; that span reads REWK. L-homocysteine is bound by residues 435-437 and Glu488; that span reads IGS. L-methionine-binding positions include 435 to 437 and Glu488; that span reads IGS. 5-methyltetrahydropteroyltri-L-glutamate is bound by residues 519 to 520 and Trp565; that span reads RC. Asp603 serves as a coordination point for L-homocysteine. Asp603 contacts L-methionine. Glu609 is a binding site for 5-methyltetrahydropteroyltri-L-glutamate. Residues His645, Cys647, and Glu669 each coordinate Zn(2+). Residue His698 is the Proton donor of the active site. Cys730 lines the Zn(2+) pocket.

The protein belongs to the vitamin-B12 independent methionine synthase family. The cofactor is Zn(2+).

It catalyses the reaction 5-methyltetrahydropteroyltri-L-glutamate + L-homocysteine = tetrahydropteroyltri-L-glutamate + L-methionine. It participates in amino-acid biosynthesis; L-methionine biosynthesis via de novo pathway; L-methionine from L-homocysteine (MetE route): step 1/1. Catalyzes the transfer of a methyl group from 5-methyltetrahydrofolate to homocysteine resulting in methionine formation. This Bacillus cereus (strain AH820) protein is 5-methyltetrahydropteroyltriglutamate--homocysteine methyltransferase.